A 329-amino-acid chain; its full sequence is Ribosome biogenesis regulatory protein homolog (329 aa).

Disordered stretches follow at residues 227–248 (KANI…VSAE) and 262–329 (KKAK…NKRK). The span at 278 to 295 (LREKKEKQEKKGAKEATR) shows a compositional bias: basic and acidic residues. Basic residues predominate over residues 320 to 329 (AKKKGANKRK).

The protein belongs to the RRS1 family.

Its subcellular location is the nucleus. It is found in the nucleolus. Involved in ribosomal large subunit assembly. The sequence is that of Ribosome biogenesis regulatory protein homolog from Caenorhabditis briggsae.